The sequence spans 288 residues: Bifunctional protein FolD (288 aa).

NADP(+)-binding positions include 168–170 (GRG), threonine 195, and valine 236.

It belongs to the tetrahydrofolate dehydrogenase/cyclohydrolase family. As to quaternary structure, homodimer.

It carries out the reaction (6R)-5,10-methylene-5,6,7,8-tetrahydrofolate + NADP(+) = (6R)-5,10-methenyltetrahydrofolate + NADPH. The enzyme catalyses (6R)-5,10-methenyltetrahydrofolate + H2O = (6R)-10-formyltetrahydrofolate + H(+). It functions in the pathway one-carbon metabolism; tetrahydrofolate interconversion. Its function is as follows. Catalyzes the oxidation of 5,10-methylenetetrahydrofolate to 5,10-methenyltetrahydrofolate and then the hydrolysis of 5,10-methenyltetrahydrofolate to 10-formyltetrahydrofolate. The chain is Bifunctional protein FolD from Mycobacterium sp. (strain JLS).